Here is a 213-residue protein sequence, read N- to C-terminus: Orotate phosphoribosyltransferase (213 aa).

Residue K26 participates in 5-phospho-alpha-D-ribose 1-diphosphate binding. 34–35 contributes to the orotate binding site; sequence FF. 5-phospho-alpha-D-ribose 1-diphosphate contacts are provided by residues 72–73, R98, K99, K102, H104, and 123–131; these read YK and DDVISAGTS. Orotate-binding residues include S127 and R155.

The protein belongs to the purine/pyrimidine phosphoribosyltransferase family. PyrE subfamily. In terms of assembly, homodimer. The cofactor is Mg(2+).

The enzyme catalyses orotidine 5'-phosphate + diphosphate = orotate + 5-phospho-alpha-D-ribose 1-diphosphate. The protein operates within pyrimidine metabolism; UMP biosynthesis via de novo pathway; UMP from orotate: step 1/2. In terms of biological role, catalyzes the transfer of a ribosyl phosphate group from 5-phosphoribose 1-diphosphate to orotate, leading to the formation of orotidine monophosphate (OMP). This is Orotate phosphoribosyltransferase from Neisseria meningitidis serogroup A / serotype 4A (strain DSM 15465 / Z2491).